The following is a 494-amino-acid chain: ETS translocation variant 4 (494 aa).

Disordered stretches follow at residues 82 to 113 (ENSVAFHSPPVKIKKEPQSPGSDPSQSCSHKQ) and 139 to 201 (AGGS…SGSA). Residues 100–113 (SPGSDPSQSCSHKQ) are compositionally biased toward polar residues. Low complexity predominate over residues 176–187 (SSSQSHACHSHS). The segment covering 188–197 (YPMNPSSRFP) has biased composition (polar residues). The ETS DNA-binding region spans 350 to 430 (LQLWQFLVAL…AGERYVYKFV (81 aa)).

The protein belongs to the ETS family. Phosphorylated. As to expression, in the embryo, expressed ubiquitously until the late blastula stage, in the marginal zone of gastrula stages, in the presumptive forebrain and hindbrain and in the trunk region of early somite stages. In later stages, also expressed in Rohon-Beard neurons, epiphysis, lateral line placodes, pectoral fin buds, developing lens and heart.

It localises to the nucleus. Its function is as follows. Transcriptional activator that binds to the (5'-CCGGA[AT]-3') motif. May control the acquisition of specific cell fates at an early stage during development of the somites and nervous system. May mediate the cellular effects of the fibroblast growth factors on embryogenesis. This chain is ETS translocation variant 4 (etv4), found in Danio rerio (Zebrafish).